The sequence spans 83 residues: Antitoxin ParD1 (83 aa).

The stretch at 33–60 (IRSALRLLEDRETQLRALREALEAGERS) forms a coiled coil. Positions 54-83 (LEAGERSGSSTPFDFDGFLGRKRADASRGR) are disordered.

The protein belongs to the ParD antitoxin family.

Functionally, antitoxin component of a type II toxin-antitoxin (TA) system. This is Antitoxin ParD1 (parD1) from Mycobacterium tuberculosis (strain CDC 1551 / Oshkosh).